Here is a 194-residue protein sequence, read N- to C-terminus: Flavin prenyltransferase UbiX (194 aa).

FMN contacts are provided by residues 9-11 (GAS), Ser35, 86-89 (SIKT), and Arg121. Dimethylallyl phosphate contacts are provided by Tyr151 and Lys167.

The protein belongs to the UbiX/PAD1 family.

The catalysed reaction is dimethylallyl phosphate + FMNH2 = prenylated FMNH2 + phosphate. Involved in the carboxylation of phenylphosphate. In terms of biological role, flavin prenyltransferase that catalyzes the synthesis of the prenylated FMN cofactor (prenyl-FMN) for 4-hydroxy-3-polyprenylbenzoic acid decarboxylase UbiD. The prenyltransferase is metal-independent and links a dimethylallyl moiety from dimethylallyl monophosphate (DMAP) to the flavin N5 and C6 atoms of FMN. This Thauera aromatica protein is Flavin prenyltransferase UbiX.